Here is a 35-residue protein sequence, read N- to C-terminus: Entry-fusion complex protein OPG076 (35 aa).

The helical transmembrane segment at 2–22 (LVVIMFFIAFVFCSWLSYSYL) threads the bilayer. At 23-35 (CPYISTKELNKSR) the chain is on the virion surface side.

This sequence belongs to the orthopoxvirus OPG076 family. Component of the entry fusion complex (EFC) composed of OPG053, OPG076, OPG086, OPG094, OPG095, OPG099, OPG107, OPG143, OPG104, OPG147 and OPG155. Except for OPG095 and OPG053, each of the EFC proteins is required for assembly or stability of the complex. In terms of processing, unglycosylated because produced in viral factories instead of the classic ER -Golgi route.

Its subcellular location is the virion membrane. In terms of biological role, component of the entry fusion complex (EFC), which consists of 11 proteins. During cell infection, this complex mediates entry of the virion core into the host cytoplasm by a two-step mechanism consisting of lipid mixing of the viral and cellular membranes and subsequent pore formation. The polypeptide is Entry-fusion complex protein OPG076 (OPG076) (Cynomys gunnisoni (Gunnison's prairie dog)).